Consider the following 451-residue polypeptide: tRNA-2-methylthio-N(6)-dimethylallyladenosine synthase (451 aa).

In terms of domain architecture, MTTase N-terminal spans 1 to 116; that stretch reads MTYFFETYGC…LPQIFDEIKA (116 aa). Positions 10, 46, 79, 162, 166, and 169 each coordinate [4Fe-4S] cluster. The Radical SAM core domain occupies 148 to 384; sequence SPKSFQSYVP…IDLQLKITAK (237 aa). Residues 387–451 enclose the TRAM domain; sequence KAKLGKKVDI…KGKTFRANLN (65 aa).

Belongs to the methylthiotransferase family. MiaB subfamily. Monomer. Requires [4Fe-4S] cluster as cofactor.

It is found in the cytoplasm. The catalysed reaction is N(6)-dimethylallyladenosine(37) in tRNA + (sulfur carrier)-SH + AH2 + 2 S-adenosyl-L-methionine = 2-methylsulfanyl-N(6)-dimethylallyladenosine(37) in tRNA + (sulfur carrier)-H + 5'-deoxyadenosine + L-methionine + A + S-adenosyl-L-homocysteine + 2 H(+). In terms of biological role, catalyzes the methylthiolation of N6-(dimethylallyl)adenosine (i(6)A), leading to the formation of 2-methylthio-N6-(dimethylallyl)adenosine (ms(2)i(6)A) at position 37 in tRNAs that read codons beginning with uridine. This Treponema denticola (strain ATCC 35405 / DSM 14222 / CIP 103919 / JCM 8153 / KCTC 15104) protein is tRNA-2-methylthio-N(6)-dimethylallyladenosine synthase.